The primary structure comprises 370 residues: 3-isopropylmalate dehydrogenase (370 aa).

Substrate-binding residues include Arg99, Arg109, Arg137, and Asp227. 3 residues coordinate Mg(2+): Asp227, Asp251, and Asp255. 290–302 (GSAPDIAGQDKAN) contacts NAD(+).

The protein belongs to the isocitrate and isopropylmalate dehydrogenases family. LeuB type 1 subfamily. Homodimer. Mg(2+) is required as a cofactor. The cofactor is Mn(2+).

The protein localises to the cytoplasm. It carries out the reaction (2R,3S)-3-isopropylmalate + NAD(+) = 4-methyl-2-oxopentanoate + CO2 + NADH. Its pathway is amino-acid biosynthesis; L-leucine biosynthesis; L-leucine from 3-methyl-2-oxobutanoate: step 3/4. Catalyzes the oxidation of 3-carboxy-2-hydroxy-4-methylpentanoate (3-isopropylmalate) to 3-carboxy-4-methyl-2-oxopentanoate. The product decarboxylates to 4-methyl-2 oxopentanoate. This is 3-isopropylmalate dehydrogenase from Rhodospirillum rubrum (strain ATCC 11170 / ATH 1.1.1 / DSM 467 / LMG 4362 / NCIMB 8255 / S1).